Consider the following 214-residue polypeptide: Protein-L-isoaspartate O-methyltransferase 1 (214 aa).

The active site involves Ser62.

The protein belongs to the methyltransferase superfamily. L-isoaspartyl/D-aspartyl protein methyltransferase family.

It is found in the cytoplasm. It carries out the reaction [protein]-L-isoaspartate + S-adenosyl-L-methionine = [protein]-L-isoaspartate alpha-methyl ester + S-adenosyl-L-homocysteine. Catalyzes the methyl esterification of L-isoaspartyl residues in peptides and proteins that result from spontaneous decomposition of normal L-aspartyl and L-asparaginyl residues. It plays a role in the repair and/or degradation of damaged proteins. This Syntrophobacter fumaroxidans (strain DSM 10017 / MPOB) protein is Protein-L-isoaspartate O-methyltransferase 1.